Consider the following 255-residue polypeptide: Hydroxyacylglutathione hydrolase (255 aa).

Residues His56, His58, Asp60, His61, His112, Asp129, and His167 each contribute to the Zn(2+) site.

This sequence belongs to the metallo-beta-lactamase superfamily. Glyoxalase II family. In terms of assembly, monomer. Zn(2+) is required as a cofactor.

It carries out the reaction an S-(2-hydroxyacyl)glutathione + H2O = a 2-hydroxy carboxylate + glutathione + H(+). The protein operates within secondary metabolite metabolism; methylglyoxal degradation; (R)-lactate from methylglyoxal: step 2/2. Thiolesterase that catalyzes the hydrolysis of S-D-lactoyl-glutathione to form glutathione and D-lactic acid. The sequence is that of Hydroxyacylglutathione hydrolase from Pseudomonas fluorescens (strain SBW25).